The following is a 186-amino-acid chain: MKRLISCLTIICALNRSAAAETTSSPCSRWISLLKPVCQRIHQTWTEGHDDMYFSGYAWHNRYTYRPEKIKSYNEAAWGGGLGKSLFDEKGNWHGLYAIAFLDSHRHIEPAVGYAYLKTASVNKDIKAGLGYSVLVTSRVDYDNVPFPGALPWVALFYKRTTVAATYIPGSAGAGNVLYILGKISL.

The signal sequence occupies residues methionine 1–alanine 19. Residues histidine 60, aspartate 103, and serine 104 contribute to the active site.

The protein belongs to the lipid A palmitoyltransferase family. Homodimer.

The protein resides in the cell outer membrane. It catalyses the reaction a lipid A + a 1,2-diacyl-sn-glycero-3-phosphocholine = a hepta-acyl lipid A + a 2-acyl-sn-glycero-3-phosphocholine. It carries out the reaction a lipid IVA + a 1,2-diacyl-sn-glycero-3-phosphocholine = a lipid IVB + a 2-acyl-sn-glycero-3-phosphocholine. The catalysed reaction is a lipid IIA + a 1,2-diacyl-sn-glycero-3-phosphocholine = a lipid IIB + a 2-acyl-sn-glycero-3-phosphocholine. Its function is as follows. Transfers a fatty acid residue from the sn-1 position of a phospholipid to the N-linked hydroxyfatty acid chain on the proximal unit of lipid A or its precursors. Confers resistance to cationic antimicrobial peptides (CAMPs). Promotes the ability of L.pneumophila to replicate and/or survive in macrophages. Important for ability to kill macrophages and to promote the virulence. This Legionella pneumophila protein is Lipid A acyltransferase PagP.